A 279-amino-acid chain; its full sequence is Shikimate dehydrogenase (NADP(+)) (279 aa).

Shikimate is bound by residues 14–16 (SIS) and T63. The Proton acceptor role is filled by K67. E79 serves as a coordination point for NADP(+). 2 residues coordinate shikimate: N88 and D103. Residues 127-131 (GAGGA), 151-156 (NRTYEK), and M219 contribute to the NADP(+) site. Y221 contributes to the shikimate binding site. G242 contributes to the NADP(+) binding site.

The protein belongs to the shikimate dehydrogenase family. As to quaternary structure, homodimer.

The catalysed reaction is shikimate + NADP(+) = 3-dehydroshikimate + NADPH + H(+). It functions in the pathway metabolic intermediate biosynthesis; chorismate biosynthesis; chorismate from D-erythrose 4-phosphate and phosphoenolpyruvate: step 4/7. Involved in the biosynthesis of the chorismate, which leads to the biosynthesis of aromatic amino acids. Catalyzes the reversible NADPH linked reduction of 3-dehydroshikimate (DHSA) to yield shikimate (SA). This is Shikimate dehydrogenase (NADP(+)) from Caldicellulosiruptor saccharolyticus (strain ATCC 43494 / DSM 8903 / Tp8T 6331).